We begin with the raw amino-acid sequence, 347 residues long: Anthranilate phosphoribosyltransferase (347 aa).

Residues glycine 86, 89–90, threonine 94, 96–99, 114–122, and serine 126 contribute to the 5-phospho-alpha-D-ribose 1-diphosphate site; these read GD, NIST, and KHGNRSVSS. Anthranilate is bound at residue glycine 86. Serine 98 contributes to the Mg(2+) binding site. Asparagine 117 is a binding site for anthranilate. Arginine 172 contacts anthranilate. Mg(2+) is bound by residues aspartate 230 and glutamate 231.

This sequence belongs to the anthranilate phosphoribosyltransferase family. Homodimer. Mg(2+) serves as cofactor.

The catalysed reaction is N-(5-phospho-beta-D-ribosyl)anthranilate + diphosphate = 5-phospho-alpha-D-ribose 1-diphosphate + anthranilate. The protein operates within amino-acid biosynthesis; L-tryptophan biosynthesis; L-tryptophan from chorismate: step 2/5. Its function is as follows. Catalyzes the transfer of the phosphoribosyl group of 5-phosphorylribose-1-pyrophosphate (PRPP) to anthranilate to yield N-(5'-phosphoribosyl)-anthranilate (PRA). This is Anthranilate phosphoribosyltransferase from Shewanella frigidimarina (strain NCIMB 400).